A 289-amino-acid polypeptide reads, in one-letter code: SAGA-associated factor 29kDa (289 aa).

A coiled-coil region spans residues 9–36 (AQQIQDRLKDIQQNIHNVDEERRRAENS). In terms of domain architecture, SGF29 C-terminal spans 137–278 (GNYVAKVGDN…VIAYRPTKKG (142 aa)). Histone H3K4me3 N-terminus binding regions lie at residues 179-181 (DID) and 225-228 (QTTC). The interval 249-251 (FED) is histone H3K4me3 binding.

The protein belongs to the SGF29 family. In terms of assembly, component of the Spt-Ada-Gcn5 acetyltransferase (SAGA) complex consisting of wda/Taf5L, Saf6, Taf9, Taf10b, Taf12, Ada1, Spt3, Spt7, Spt20, Sf3b3, Sf3b5, Nipped-A/Tra1, a histone acetyltransferase (HAT) module made up of Gcn5, Ada2b (Isoform B), Ada3 and Sgf29, and a deubiquitinase (DUB) module made up of not/nonstop, Sgf11, Atxn7 and e(y)2. Component of the Chiffon histone acetyltransferase (CHAT) complex consisting of Ada3, Sgf29, Gcn5, chif/chiffon and Ada2b (Isoform A).

The protein resides in the nucleus. In terms of biological role, component of both the SAGA and CHAT histone acetyltransferase complexes, which both predominantly acetylate histone H3. This Drosophila melanogaster (Fruit fly) protein is SAGA-associated factor 29kDa.